A 365-amino-acid polypeptide reads, in one-letter code: Deoxyribonuclease-2-alpha (365 aa).

A signal peptide spans 1-19 (MATLSSLLLTALLWVPVGT). Cysteine 22 and cysteine 162 are disulfide-bonded. Residues asparagine 215, asparagine 269, and asparagine 293 are each glycosylated (N-linked (GlcNAc...) asparagine). Intrachain disulfides connect cysteine 270/cysteine 348 and cysteine 311/cysteine 330. Histidine 298 is an active-site residue.

The protein belongs to the DNase II family.

The protein resides in the lysosome. It catalyses the reaction Endonucleolytic cleavage to nucleoside 3'-phosphates and 3'-phosphooligonucleotide end-products.. Its function is as follows. Hydrolyzes DNA under acidic conditions with a preference for double-stranded DNA. Plays a major role in the clearance of nucleic acids generated through apoptosis, hence preventing autoinflammation. Necessary for proper fetal development and for definitive erythropoiesis in fetal liver and bone marrow, where it degrades nuclear DNA expelled from erythroid precursor cells. The chain is Deoxyribonuclease-2-alpha (DNASE2) from Bos taurus (Bovine).